We begin with the raw amino-acid sequence, 341 residues long: L-threonine 3-dehydrogenase (341 aa).

Position 38 (Cys38) interacts with Zn(2+). Active-site charge relay system residues include Thr40 and His43. Positions 63, 64, 93, 96, 99, and 107 each coordinate Zn(2+). Residues Ile175, Asp195, Arg200, 262 to 264 (LGI), and 286 to 287 (IY) contribute to the NAD(+) site.

The protein belongs to the zinc-containing alcohol dehydrogenase family. In terms of assembly, homotetramer. Zn(2+) serves as cofactor.

The protein resides in the cytoplasm. The enzyme catalyses L-threonine + NAD(+) = (2S)-2-amino-3-oxobutanoate + NADH + H(+). Its pathway is amino-acid degradation; L-threonine degradation via oxydo-reductase pathway; glycine from L-threonine: step 1/2. Catalyzes the NAD(+)-dependent oxidation of L-threonine to 2-amino-3-ketobutyrate. In Escherichia coli O157:H7, this protein is L-threonine 3-dehydrogenase.